Here is an 88-residue protein sequence, read N- to C-terminus: Small ribosomal subunit protein bS16 (88 aa).

The protein belongs to the bacterial ribosomal protein bS16 family.

This Anaeromyxobacter dehalogenans (strain 2CP-1 / ATCC BAA-258) protein is Small ribosomal subunit protein bS16.